The chain runs to 479 residues: Ribosomal RNA small subunit methyltransferase F (479 aa).

Residues 125–131, Glu149, Asp176, and Asp194 contribute to the S-adenosyl-L-methionine site; that span reads AAAPGSK. The Nucleophile role is filled by Cys247.

The protein belongs to the class I-like SAM-binding methyltransferase superfamily. RsmB/NOP family.

Its subcellular location is the cytoplasm. It catalyses the reaction cytidine(1407) in 16S rRNA + S-adenosyl-L-methionine = 5-methylcytidine(1407) in 16S rRNA + S-adenosyl-L-homocysteine + H(+). Functionally, specifically methylates the cytosine at position 1407 (m5C1407) of 16S rRNA. In Shigella sonnei (strain Ss046), this protein is Ribosomal RNA small subunit methyltransferase F.